Reading from the N-terminus, the 450-residue chain is MSLSSLEHKLTYHVRNWLHGSGFAWNTLHMSAFLVALCACIPAGFISQISLYSEPWREHLGYSVVEVNVLFSAVNLGGYITPPLLGLLSDAHGPVMLSWLSFVGFVPTYAYAAWVFASGEPHFYASVLCFTLIGISTNALYFSALFTASKLYPASKLCSISLPATFYGMASVLGSQLLKIPWFRNGLPYLDLSRVFRTLAVAYTLISFCMWFATSIVTMLKVKAATLTFAGMQSPTEPLLPQDIRRRLRNFFHDPAAYFMALVLLLSLGPMEMFLTNMGSLSSLLGQASVLPEFAIASTCSRFLSGLIIDLCIHNGVSTMSVQWAVLLLGVVGQWIVVLATRASDGPLLSLASALSGACYGGLFTVSPILTLAVWGDAVFGTAYGSFMITPAVGSILFGLTYAHIFDANCTPSGVLPVCIQHVFWSSTSALAIALLFSVLMYLVFWRRKV.

12 consecutive transmembrane segments (helical) span residues 32-52 (AFLV…ISLY), 69-89 (VLFS…GLLS), 96-116 (MLSW…AWVF), 127-147 (VLCF…ALFT), 157-177 (LCSI…GSQL), 199-219 (LAVA…IVTM), 255-275 (PAAY…EMFL), 290-309 (VLPE…GLII), 320-340 (MSVQ…VVLA), 355-375 (LSGA…LAVW), 378-398 (AVFG…SILF), and 423-443 (VFWS…LMYL).

This sequence belongs to the major facilitator superfamily.

Its subcellular location is the vacuole membrane. Functionally, probable transporter. This chain is Probable transporter MCH1 (MCH1), found in Eremothecium gossypii (strain ATCC 10895 / CBS 109.51 / FGSC 9923 / NRRL Y-1056) (Yeast).